The primary structure comprises 216 residues: ATP-dependent Clp protease proteolytic subunit (216 aa).

Ser101 functions as the Nucleophile in the catalytic mechanism. His126 is a catalytic residue.

It belongs to the peptidase S14 family. As to quaternary structure, component of the chloroplastic Clp protease core complex.

It is found in the plastid. It localises to the chloroplast stroma. The enzyme catalyses Hydrolysis of proteins to small peptides in the presence of ATP and magnesium. alpha-casein is the usual test substrate. In the absence of ATP, only oligopeptides shorter than five residues are hydrolyzed (such as succinyl-Leu-Tyr-|-NHMec, and Leu-Tyr-Leu-|-Tyr-Trp, in which cleavage of the -Tyr-|-Leu- and -Tyr-|-Trp bonds also occurs).. In terms of biological role, cleaves peptides in various proteins in a process that requires ATP hydrolysis. Has a chymotrypsin-like activity. Plays a major role in the degradation of misfolded proteins. The sequence is that of ATP-dependent Clp protease proteolytic subunit from Oryza nivara (Indian wild rice).